The following is a 178-amino-acid chain: Large ribosomal subunit protein uL6 (178 aa).

It belongs to the universal ribosomal protein uL6 family. Part of the 50S ribosomal subunit.

In terms of biological role, this protein binds to the 23S rRNA, and is important in its secondary structure. It is located near the subunit interface in the base of the L7/L12 stalk, and near the tRNA binding site of the peptidyltransferase center. The protein is Large ribosomal subunit protein uL6 of Limosilactobacillus fermentum (strain NBRC 3956 / LMG 18251) (Lactobacillus fermentum).